Reading from the N-terminus, the 558-residue chain is Phosphatidylserine lipase ABHD16A (558 aa).

The next 2 membrane-spanning stretches (helical) occupy residues 60 to 80 and 93 to 113; these read ILAL…FAFF and VVPF…VACL. At 114–558 the chain is on the cytoplasmic side; that stretch reads RGIGRWTNPQ…AQNFQMPWHL (445 aa). Positions 281 to 407 constitute an AB hydrolase-1 domain; sequence LVICCEGNAG…LVTRTVRQHL (127 aa). Active-site charge relay system residues include Ser-355, Asp-430, and His-507.

This sequence belongs to the AB hydrolase superfamily. ABHD16 family.

It is found in the membrane. The enzyme catalyses 1-heptadecanoyl-2-(5Z,8Z,11Z,14Z-eicosatetraenoyl)-sn-glycero-3-phosphoserine + H2O = 1-heptadecanoyl-sn-glycero-3-phosphoserine + (5Z,8Z,11Z,14Z)-eicosatetraenoate + H(+). The catalysed reaction is 1-hexadecanoyl-2-(9Z-octadecenoyl)-sn-glycero-3-phospho-L-serine + H2O = 1-hexadecanoyl-sn-glycero-3-phospho-L-serine + (9Z)-octadecenoate + H(+). It catalyses the reaction 1-octadecanoyl-2-(9Z,12Z-octadecadienoyl)-sn-glycero-3-phosphoserine + H2O = 1-octadecanoyl-sn-glycero-3-phosphoserine + (9Z,12Z)-octadecadienoate + H(+). It carries out the reaction 1-heptadecanoyl-2-(5Z,8Z,11Z,14Z-eicosatetraenoyl)-sn-glycero-3-phosphocholine + H2O = 1-heptadecanoyl-sn-glycero-3-phosphocholine + (5Z,8Z,11Z,14Z)-eicosatetraenoate + H(+). The enzyme catalyses 1-hexadecanoyl-2-(9Z-octadecenoyl)-sn-glycero-3-phosphoglycerol + H2O = 1-hexadecanoyl-sn-glycero-3-phosphoglycerol + (9Z)-octadecenoate + H(+). The catalysed reaction is 1-hexadecanoyl-2-(9Z-octadecenoyl)-sn-glycero-3-phospho-(1D-myo-inositol) + H2O = 1-hexadecanoyl-sn-glycero-3-phospho-(1D-myo-inositol) + (9Z)-octadecenoate + H(+). It catalyses the reaction 1-heptadecanoyl-2-(5Z,8Z,11Z,14Z-eicosatetraenoyl)-sn-glycero-3-phosphoethanolamine + H2O = 1-heptadecanoyl-sn-glycero-3-phosphoethanolamine + (5Z,8Z,11Z,14Z)-eicosatetraenoate + H(+). It carries out the reaction 1-hexadecanoyl-2-(9Z-octadecenoyl)-sn-glycero-3-phospho-(1'-sn-glycerol) + H2O = 1-hexadecanoyl-sn-glycero-3-phospho-(1'-sn-glycerol) + (9Z)-octadecenoate + H(+). The enzyme catalyses Hydrolyzes glycerol monoesters of long-chain fatty acids.. The catalysed reaction is 1-tetradecanoylglycerol + H2O = tetradecanoate + glycerol + H(+). It catalyses the reaction 2-hexadecanoylglycerol + H2O = glycerol + hexadecanoate + H(+). It carries out the reaction 1-(9Z-octadecenoyl)-glycerol + H2O = glycerol + (9Z)-octadecenoate + H(+). The enzyme catalyses 2-(9Z-octadecenoyl)-glycerol + H2O = glycerol + (9Z)-octadecenoate + H(+). The catalysed reaction is 2-(9Z,12Z-octadecadienoyl)-glycerol + H2O = (9Z,12Z)-octadecadienoate + glycerol + H(+). It catalyses the reaction 1-(5Z,8Z,11Z,14Z-eicosatetraenoyl)-glycerol + H2O = glycerol + (5Z,8Z,11Z,14Z)-eicosatetraenoate + H(+). It carries out the reaction 2-(5Z,8Z,11Z,14Z-eicosatetraenoyl)-glycerol + H2O = glycerol + (5Z,8Z,11Z,14Z)-eicosatetraenoate + H(+). The enzyme catalyses prostaglandin D2-1-glycerol ester + H2O = prostaglandin D2 + glycerol + H(+). The catalysed reaction is 2-glyceryl-15-deoxy-Delta(12,14)-prostaglandin J2 + H2O = 15-deoxy-Delta(12,14)-prostaglandin J2 + glycerol + H(+). It catalyses the reaction 1-(9Z,12Z-octadecadienoyl)-glycerol + H2O = (9Z,12Z)-octadecadienoate + glycerol + H(+). Phosphatidylserine (PS) lipase that mediates the hydrolysis of phosphatidylserine to generate lysophosphatidylserine (LPS). LPS constitutes a class of signaling lipids that regulates immunological and neurological processes. Has no activity towards diacylglycerol, triacylglycerol or lysophosphatidylserine lipase. Also has monoacylglycerol lipase activity, with preference for 1-(9Z,12Z-octadecadienoyl)-glycerol (1-LG) and 2-glyceryl-15-deoxy-Delta(12,14)-prostaglandin J2 (15d-PGJ(2)-G). The sequence is that of Phosphatidylserine lipase ABHD16A from Bos taurus (Bovine).